Reading from the N-terminus, the 309-residue chain is ESX-3 secretion system protein EccE3 (309 aa).

The next 2 membrane-spanning stretches (helical) occupy residues I5 to T25 and V29 to L49.

The protein belongs to the EccE family. As to quaternary structure, part of the ESX-3 / type VII secretion system (T7SS), which is composed of cytosolic and membrane components. The ESX-3 membrane complex is composed of EccB3, EccC3, EccD3 and EccE3.

The protein resides in the cell inner membrane. Functionally, part of the ESX-3 specialized secretion system, which is required for siderophore-mediated iron acquisition and for the secretion of EsxH and EsxG. This Mycolicibacterium smegmatis (strain ATCC 700084 / mc(2)155) (Mycobacterium smegmatis) protein is ESX-3 secretion system protein EccE3.